The following is a 358-amino-acid chain: DnaJ homolog subfamily B member 11 (358 aa).

The signal sequence occupies residues 1–22 (MAPQNLGTFCLLLLYLIGTVIA). The region spanning 25-90 (DFYKILGVPR…EKRKQYDTYG (66 aa)) is the J domain. Thr188 carries the phosphothreonine modification. Asn261 is a glycosylation site (N-linked (GlcNAc...) asparagine).

In terms of assembly, part of a large chaperone multiprotein complex comprising DNAJB11, HSP90B1, HSPA5, HYOU, PDIA2, PDIA4, PDIA6, PPIB, SDF2L1, UGGT1 and very small amounts of ERP29, but not, or at very low levels, CALR nor CANX. Binds to denatured substrates in an ATP-independent manner. Interacts via the J domain with HSPA5 in an ATP-dependent manner. Contains high-mannose Endo H-sensitive carbohydrates. In terms of processing, cys-169, Cys-171, Cys-193 and Cys-196 form intramolecular disulfide bonds. The preferential partner for each Cys is not known.

Its subcellular location is the endoplasmic reticulum lumen. Functionally, as a co-chaperone for HSPA5 it is required for proper folding, trafficking or degradation of proteins. Binds directly to both unfolded proteins that are substrates for ERAD and nascent unfolded peptide chains, but dissociates from the HSPA5-unfolded protein complex before folding is completed. May help recruiting HSPA5 and other chaperones to the substrate. Stimulates HSPA5 ATPase activity. It is necessary for maturation and correct trafficking of PKD1. In Bos taurus (Bovine), this protein is DnaJ homolog subfamily B member 11 (DNAJB11).